Here is a 95-residue protein sequence, read N- to C-terminus: UPF0298 protein LVIS_1401 (95 aa).

The protein belongs to the UPF0298 family.

Its subcellular location is the cytoplasm. The sequence is that of UPF0298 protein LVIS_1401 from Levilactobacillus brevis (strain ATCC 367 / BCRC 12310 / CIP 105137 / JCM 1170 / LMG 11437 / NCIMB 947 / NCTC 947) (Lactobacillus brevis).